The following is a 577-amino-acid chain: Arginine--tRNA ligase (577 aa).

The short motif at 122-132 (PNVAKEMHVGH) is the 'HIGH' region element.

Belongs to the class-I aminoacyl-tRNA synthetase family. As to quaternary structure, monomer.

The protein resides in the cytoplasm. It catalyses the reaction tRNA(Arg) + L-arginine + ATP = L-arginyl-tRNA(Arg) + AMP + diphosphate. This chain is Arginine--tRNA ligase, found in Shigella dysenteriae serotype 1 (strain Sd197).